The primary structure comprises 320 residues: Mitochondrial ribosome-associated GTPase 1 (320 aa).

The 173-residue stretch at Leu-37 to Pro-209 folds into the CP-type G domain. Residues Asn-81–Asp-84, Asn-153–Ser-158, and Gly-205 contribute to the GTP site.

Belongs to the TRAFAC class YlqF/YawG GTPase family. MTG1 subfamily.

It is found in the mitochondrion inner membrane. Plays a role in the regulation of the mitochondrial ribosome assembly and of translational activity. Displays mitochondrial GTPase activity. In Ictalurus punctatus (Channel catfish), this protein is Mitochondrial ribosome-associated GTPase 1.